The following is a 249-amino-acid chain: MIDWESLRAIVLDIEGTTCPVDFVTGSLFPYARQHLGTLLSQDDQQAPLKPLLDEVRIAWKHENSAEAPAYSDSQDPLALLPYLQWLIDQDRKLAPLKELQGLTWRHGYQSGALTTPLFADVAPALKRWQQRGLRLAVYSSGSVAAQQLFYGHTSDGDLSDLFERWYDTRLGPKNEAQSYTLLAADLQLPAHAVLFISDSSGELAAAQAAGLQICGSQRPGNPETLSAKWPVVVSSLEALAPSGPPGLR.

The protein belongs to the HAD-like hydrolase superfamily. MasA/MtnC family. As to quaternary structure, monomer. It depends on Mg(2+) as a cofactor.

It carries out the reaction 5-methylsulfanyl-2,3-dioxopentyl phosphate + H2O = 1,2-dihydroxy-5-(methylsulfanyl)pent-1-en-3-one + phosphate. The protein operates within amino-acid biosynthesis; L-methionine biosynthesis via salvage pathway; L-methionine from S-methyl-5-thio-alpha-D-ribose 1-phosphate: step 3/6. Its pathway is amino-acid biosynthesis; L-methionine biosynthesis via salvage pathway; L-methionine from S-methyl-5-thio-alpha-D-ribose 1-phosphate: step 4/6. Bifunctional enzyme that catalyzes the enolization of 2,3-diketo-5-methylthiopentyl-1-phosphate (DK-MTP-1-P) into the intermediate 2-hydroxy-3-keto-5-methylthiopentenyl-1-phosphate (HK-MTPenyl-1-P), which is then dephosphorylated to form the acireductone 1,2-dihydroxy-3-keto-5-methylthiopentene (DHK-MTPene). The polypeptide is Enolase-phosphatase E1 (Synechococcus sp. (strain RCC307)).